The primary structure comprises 69 residues: Cytochrome c oxidase subunit 8A, mitochondrial (69 aa).

The N-terminal 25 residues, 1–25 (MSVLTPLLLRGLAGSARRLPVPRAQ), are a transit peptide targeting the mitochondrion. Residues 2–19 (SVLTPLLLRGLAGSARRL) carry the SIFI-degron motif. The Mitochondrial matrix portion of the chain corresponds to 26 to 36 (IHSKPPREQLG). The chain crosses the membrane as a helical span at residues 37-60 (TMDVAIGITSCFLCFLLPAGWVLS). Residues 61-69 (HLESYKKRE) lie on the Mitochondrial intermembrane side of the membrane.

Belongs to the cytochrome c oxidase VIII family. In terms of assembly, component of the cytochrome c oxidase (complex IV, CIV), a multisubunit enzyme composed of 14 subunits. The complex is composed of a catalytic core of 3 subunits MT-CO1, MT-CO2 and MT-CO3, encoded in the mitochondrial DNA, and 11 supernumerary subunits COX4I, COX5A, COX5B, COX6A, COX6B, COX6C, COX7A, COX7B, COX7C, COX8 and NDUFA4, which are encoded in the nuclear genome. The complex exists as a monomer or a dimer and forms supercomplexes (SCs) in the inner mitochondrial membrane with NADH-ubiquinone oxidoreductase (complex I, CI) and ubiquinol-cytochrome c oxidoreductase (cytochrome b-c1 complex, complex III, CIII), resulting in different assemblies (supercomplex SCI(1)III(2)IV(1) and megacomplex MCI(2)III(2)IV(2)). In terms of processing, in response to mitochondrial stress, the precursor protein is ubiquitinated by the SIFI complex in the cytoplasm before mitochondrial import, leading to its degradation. Within the SIFI complex, UBR4 initiates ubiquitin chain that are further elongated or branched by KCMF1.

The protein resides in the mitochondrion inner membrane. It functions in the pathway energy metabolism; oxidative phosphorylation. In terms of biological role, component of the cytochrome c oxidase, the last enzyme in the mitochondrial electron transport chain which drives oxidative phosphorylation. The respiratory chain contains 3 multisubunit complexes succinate dehydrogenase (complex II, CII), ubiquinol-cytochrome c oxidoreductase (cytochrome b-c1 complex, complex III, CIII) and cytochrome c oxidase (complex IV, CIV), that cooperate to transfer electrons derived from NADH and succinate to molecular oxygen, creating an electrochemical gradient over the inner membrane that drives transmembrane transport and the ATP synthase. Cytochrome c oxidase is the component of the respiratory chain that catalyzes the reduction of oxygen to water. Electrons originating from reduced cytochrome c in the intermembrane space (IMS) are transferred via the dinuclear copper A center (CU(A)) of subunit 2 and heme A of subunit 1 to the active site in subunit 1, a binuclear center (BNC) formed by heme A3 and copper B (CU(B)). The BNC reduces molecular oxygen to 2 water molecules using 4 electrons from cytochrome c in the IMS and 4 protons from the mitochondrial matrix. The chain is Cytochrome c oxidase subunit 8A, mitochondrial (COX8A) from Carlito syrichta (Philippine tarsier).